Consider the following 219-residue polypeptide: Probable nicotinate-nucleotide adenylyltransferase (219 aa).

The protein belongs to the NadD family.

It carries out the reaction nicotinate beta-D-ribonucleotide + ATP + H(+) = deamido-NAD(+) + diphosphate. Its pathway is cofactor biosynthesis; NAD(+) biosynthesis; deamido-NAD(+) from nicotinate D-ribonucleotide: step 1/1. Functionally, catalyzes the reversible adenylation of nicotinate mononucleotide (NaMN) to nicotinic acid adenine dinucleotide (NaAD). This Pseudomonas entomophila (strain L48) protein is Probable nicotinate-nucleotide adenylyltransferase.